The chain runs to 1792 residues: uncharacterized protein (1792 aa).

Positions 1–28 are enriched in low complexity; it reads MNNNNNNNNNSNNNNNSNNNNNGNSNNN. 13 disordered regions span residues 1 to 34, 162 to 187, 440 to 461, 544 to 568, 736 to 777, 837 to 979, 1044 to 1071, 1084 to 1106, 1160 to 1215, 1257 to 1290, 1651 to 1686, 1704 to 1731, and 1742 to 1761; these read MNNN…SGKG, TNIS…SHHH, KKRK…NKSS, VIDD…SIIN, NKNK…INSN, TKGK…NDLK, VSKS…KEQS, NMNN…NDNK, TSSG…VLER, NITA…NNNG, LRSK…GRKK, PRKK…NSEK, and IENK…NLNN. Over residues 169–182 the composition is skewed to polar residues; sequence KQPISSNQHPYQQK. Residues 550-559 show a composition bias toward basic residues; that stretch reads KRNKKEKKKT. The span at 741 to 776 shows a compositional bias: low complexity; the sequence is PNNINSNDNNNKNDDNNNNNNKNVDGNNNNNNNINS. The span at 838-847 shows a compositional bias: basic residues; the sequence is KGKKKGRKKK. Residues 856–873 show a composition bias toward basic and acidic residues; sequence NIKEDIKSSKKDKKKDNI. Low complexity predominate over residues 874-924; that stretch reads NDNNNDNNNDNNNDNNNDNNNDNNNDNNNDNNNNNNNNNNNNNNNNNNNHN. Residues 943–954 are compositionally biased toward basic residues; it reads KKKTRQYRKKSK. Positions 955-966 are enriched in basic and acidic residues; that stretch reads ITNDDNNEKIKQ. Positions 1045–1057 are enriched in low complexity; sequence SKSNIPSSFSSPP. Basic and acidic residues-rich tracts occupy residues 1060–1071, 1088–1106, and 1166–1192; these read TNNKNDIDKEQS, EKSK…NDNK, and NKEE…KNVD. Residues 1205-1215 show a composition bias toward basic residues; that stretch reads RKKRKKDVLER. Residues 1261–1289 are compositionally biased toward low complexity; the sequence is NNNNDNNKNNDNDNNNNNNDNIINNNNNN. 2 stretches are compositionally biased toward basic residues: residues 1660–1686 and 1704–1717; these read KEHK…GRKK and PRKK…RKSK.

This is an uncharacterized protein from Plasmodium falciparum (isolate 3D7).